The primary structure comprises 38 residues: Bacteriocin BAC79 (38 aa).

The antimicrobial activity of BAC79 was completely lost after treatment with enzymes trypsin, pepsin, proteinase-K, and carboxypeptidase, while there was no loss of activity with either amylase or lipase. In terms of biological role, has antibacterial activity against a wide spectrum of Gram-positive and Gram-negative bacteria, including L.monocytogenes which is inhibited through disruption of the cell membrane. This chain is Bacteriocin BAC79, found in Weissella confusa (Lactobacillus confusus).